Consider the following 219-residue polypeptide: Poxin (219 aa).

The active-site Proton donor is histidine 17. Residue tyrosine 138 is the Shared with catalytic histidine of dimeric partner of the active site. The active-site Proton acceptor; shared with catalytic histidine of dimeric partner is lysine 142.

The protein belongs to the poxin family. Homodimer.

The enzyme catalyses 2',3'-cGAMP + H2O = Gp(2'-5')Ap(3') + H(+). Functionally, nuclease that is responsible for viral evasion of host cGAS-STING innate immunity. Cleaves 2',3'-cGAMP which is produced by host cGAS following recognition of cytosolic DNA and blocks the subsequent 2',3'-cGAMP-mediated activation of TMEM173/STING, which normally spreads to adjacent cells and activates the interferon and NF-kappa-B immune responses. This Bos taurus (Bovine) protein is Poxin (OPG188).